A 129-amino-acid chain; its full sequence is Small ribosomal subunit protein uS11 (129 aa).

The protein belongs to the universal ribosomal protein uS11 family. Part of the 30S ribosomal subunit. Interacts with proteins S7 and S18. Binds to IF-3.

In terms of biological role, located on the platform of the 30S subunit, it bridges several disparate RNA helices of the 16S rRNA. Forms part of the Shine-Dalgarno cleft in the 70S ribosome. This Francisella tularensis subsp. mediasiatica (strain FSC147) protein is Small ribosomal subunit protein uS11.